A 527-amino-acid polypeptide reads, in one-letter code: Glucose-6-phosphate isomerase (527 aa).

The Proton donor role is filled by Glu323. Catalysis depends on residues His352 and Lys454.

Belongs to the GPI family.

The protein localises to the cytoplasm. The catalysed reaction is alpha-D-glucose 6-phosphate = beta-D-fructose 6-phosphate. It participates in carbohydrate biosynthesis; gluconeogenesis. Its pathway is carbohydrate degradation; glycolysis; D-glyceraldehyde 3-phosphate and glycerone phosphate from D-glucose: step 2/4. Functionally, catalyzes the reversible isomerization of glucose-6-phosphate to fructose-6-phosphate. The protein is Glucose-6-phosphate isomerase of Prochlorococcus marinus (strain MIT 9515).